The primary structure comprises 396 residues: MSKEKFTRNKPHVNIGTIGHVDHGKTTLTAAITTTLAASGKAQAMAYDQIDKSPEEKARGITISTTHVEYETDNRHYAHVDCPGHADYVKNMITGAAQMDGAILVVSSADGPMPQTREHILLARQVGVPALVVFMNKVDMVDDKELLELVELEVRELLSKYEFPGDDIPVVKGSALKALEGDTSEIGRPAIMKLMEACDTYIPAPVRAVDKTFLMPVEDVFSISGRGTVVTGRVERGIVKVGDEIEIVGIRPTQKTTVTGIEMFRKLLDEGQAGDNCGVLLRGTKKEDVERGQVLVKPGTVKPHKKFKAEAYILTKEEGGRHTPFFNGYRPQFYFRTTDVTGVCTLKAGTEMVMPGDKIEVSVELIAPIAMEKELRFAIREGGRTVGAGVVTEILE.

Residues 10-206 (KPHVNIGTIG…ACDTYIPAPV (197 aa)) form the tr-type G domain. Residues 19–26 (GHVDHGKT) form a G1 region. GTP is bound at residue 19-26 (GHVDHGKT). Thr26 serves as a coordination point for Mg(2+). The tract at residues 60 to 64 (GITIS) is G2. Residues 81–84 (DCPG) form a G3 region. Residues 81 to 85 (DCPGH) and 136 to 139 (NKVD) contribute to the GTP site. The interval 136–139 (NKVD) is G4. Residues 174 to 176 (SAL) form a G5 region.

Belongs to the TRAFAC class translation factor GTPase superfamily. Classic translation factor GTPase family. EF-Tu/EF-1A subfamily. As to quaternary structure, monomer.

It localises to the cytoplasm. It catalyses the reaction GTP + H2O = GDP + phosphate + H(+). Functionally, GTP hydrolase that promotes the GTP-dependent binding of aminoacyl-tRNA to the A-site of ribosomes during protein biosynthesis. This Bdellovibrio bacteriovorus (strain ATCC 15356 / DSM 50701 / NCIMB 9529 / HD100) protein is Elongation factor Tu.